The primary structure comprises 1136 residues: Receptor-type guanylate cyclase gcy-4 (1136 aa).

Residues 1–21 (MRQLNYYIFISTILTYNLTHG) form the signal peptide. Over 22 to 485 (QGPRPVIRVG…CPLPIFEQYR (464 aa)) the chain is Extracellular. Residues Asn-40, Asn-194, Asn-252, Asn-351, Asn-377, Asn-386, and Asn-438 are each glycosylated (N-linked (GlcNAc...) asparagine). The helical transmembrane segment at 486 to 506 (ALVIVAIAVTILILLAIIICM) threads the bilayer. Over 507-1136 (SSKIRNRRVE…LRREMMRVEV (630 aa)) the chain is Cytoplasmic. The region spanning 533–833 (LPMHRRASKS…EDNLMDHVFS (301 aa)) is the Protein kinase domain. The interval 536-565 (HRRASKSSQESETESASETENFTSKSGDTM) is disordered. The region spanning 891–1021 (TVFFSDLVKF…DTVNTASRME (131 aa)) is the Guanylate cyclase domain.

It belongs to the adenylyl cyclase class-4/guanylyl cyclase family. Expression is biased toward ASE right (ASER) sensory neuron.

Its subcellular location is the cell membrane. The enzyme catalyses GTP = 3',5'-cyclic GMP + diphosphate. Guanylate cyclase involved in the production of the second messenger cGMP. Regulates chemotaxis responses toward Br(1-) and I(1-) salt ions in ASE right (ASER) sensory neuron. This Caenorhabditis elegans protein is Receptor-type guanylate cyclase gcy-4.